Consider the following 446-residue polypeptide: 5-hydroxytryptamine receptor (446 aa).

Over 1–65 (MEGAEGQEEL…AALVRAAAKA (65 aa)) the chain is Extracellular. 4 N-linked (GlcNAc...) asparagine glycosylation sites follow: Asn-23, Asn-27, Asn-36, and Asn-42. The helical transmembrane segment at 66-88 (VVLGLLILATVVGNVFVIAAILL) threads the bilayer. Over 89–98 (ERHLRSAANN) the chain is Cytoplasmic. The chain crosses the membrane as a helical span at residues 99-120 (LILSLAVADLLVACLVMPLGAV). Residues 121-135 (YEVVQRWTLGPELCD) lie on the Extracellular side of the membrane. Cys-134 and Cys-214 are oxidised to a cystine. Residues 136-157 (MWTSGDVLCCTASILHLVAIAL) traverse the membrane as a helical segment. Over 158–176 (DRYWAVTNIDYIHASTAKR) the chain is Cytoplasmic. The helical transmembrane segment at 177 to 199 (VGMMIACVWTVSFFVCIAQLLGW) threads the bilayer. Over 200–227 (KDPDWNQRVSEDLRCVVSQDVGYQIFAT) the chain is Extracellular. A helical membrane pass occupies residues 228–249 (ASSFYVPVLIILILYWRIYQTA). The Cytoplasmic portion of the chain corresponds to 250-367 (RKRIRRRRGA…SKRERKAAKT (118 aa)). Residues 304 to 324 (TTTGFTNVSSNNTSPEKQSCA) are compositionally biased toward polar residues. Residues 304 to 329 (TTTGFTNVSSNNTSPEKQSCANGLEA) form a disordered region. A helical membrane pass occupies residues 368–391 (LAIITGAFVACWLPFFVLAILVPT). Topologically, residues 392-399 (CDCEVSPV) are extracellular. The chain crosses the membrane as a helical span at residues 400–422 (LTSLSLWLGYFNSTLNPVIYTVF). Topologically, residues 423–446 (SPEFRHAFQRLLCGRRVRRRRAPQ) are cytoplasmic.

This sequence belongs to the G-protein coupled receptor 1 family.

The protein localises to the cell membrane. In terms of biological role, this is a receptor for 5-hydroxytryptamine (serotonin), a biogenic hormone that function as a neurotransmitter, a hormone, and a mitogen. The protein is 5-hydroxytryptamine receptor of Bombyx mori (Silk moth).